The sequence spans 204 residues: Guanylate kinase (204 aa).

Residues 3–181 (GTLYIVSAAS…AVSEMSAIFT (179 aa)) enclose the Guanylate kinase-like domain. 10-17 (AASGTGKS) lines the ATP pocket.

The protein belongs to the guanylate kinase family.

Its subcellular location is the cytoplasm. It catalyses the reaction GMP + ATP = GDP + ADP. Its function is as follows. Essential for recycling GMP and indirectly, cGMP. The protein is Guanylate kinase (gmk) of Xylella fastidiosa (strain 9a5c).